Here is a 158-residue protein sequence, read N- to C-terminus: Rhombotin-2 (158 aa).

2 consecutive LIM zinc-binding domains span residues 30–89 (CGGC…RLFG) and 94–153 (CASC…EWTK).

As to quaternary structure, interacts via its LIM domains with ELF2 and LDB1. Interacts with BEX2 and KDM5A. Also interacts with basic helix-loop-helix protein TAL1/SCL and can assemble in a complex with LMO2 and TAL1/SCL.

The protein localises to the nucleus. In terms of biological role, acts with TAL1/SCL to regulate red blood cell development. Also acts with LDB1 to maintain erythroid precursors in an immature state. This Bos taurus (Bovine) protein is Rhombotin-2 (LMO2).